The primary structure comprises 1050 residues: uncharacterized protein (1050 aa).

Coiled-coil stretches lie at residues 1–420 (MEKV…TAKM), 463–627 (YSLL…IREL), and 692–981 (NDSK…NLLS).

This is an uncharacterized protein from Arabidopsis thaliana (Mouse-ear cress).